We begin with the raw amino-acid sequence, 217 residues long: RING-H2 finger protein ATL40 (217 aa).

A helical transmembrane segment spans residues I28–L48. The segment at C100 to R142 adopts an RING-type; atypical zinc-finger fold. Composition is skewed to basic and acidic residues over residues T143 to P160 and D186 to Q217. The segment at T143–Q217 is disordered.

Belongs to the RING-type zinc finger family. ATL subfamily.

It localises to the membrane. The enzyme catalyses S-ubiquitinyl-[E2 ubiquitin-conjugating enzyme]-L-cysteine + [acceptor protein]-L-lysine = [E2 ubiquitin-conjugating enzyme]-L-cysteine + N(6)-ubiquitinyl-[acceptor protein]-L-lysine.. The protein operates within protein modification; protein ubiquitination. This chain is RING-H2 finger protein ATL40 (ATL40), found in Arabidopsis thaliana (Mouse-ear cress).